We begin with the raw amino-acid sequence, 273 residues long: 4-hydroxy-tetrahydrodipicolinate reductase (273 aa).

Position 12 to 17 (12 to 17) interacts with NAD(+); that stretch reads GAAGRM. NADP(+) is bound at residue Arg-39. NAD(+)-binding positions include 102 to 104 and 126 to 129; these read GTT and AANF. The active-site Proton donor/acceptor is the His-159. A (S)-2,3,4,5-tetrahydrodipicolinate-binding site is contributed by His-160. The Proton donor role is filled by Lys-163. 169 to 170 provides a ligand contact to (S)-2,3,4,5-tetrahydrodipicolinate; it reads GT.

This sequence belongs to the DapB family. In terms of assembly, homotetramer.

It is found in the cytoplasm. The enzyme catalyses (S)-2,3,4,5-tetrahydrodipicolinate + NAD(+) + H2O = (2S,4S)-4-hydroxy-2,3,4,5-tetrahydrodipicolinate + NADH + H(+). The catalysed reaction is (S)-2,3,4,5-tetrahydrodipicolinate + NADP(+) + H2O = (2S,4S)-4-hydroxy-2,3,4,5-tetrahydrodipicolinate + NADPH + H(+). It participates in amino-acid biosynthesis; L-lysine biosynthesis via DAP pathway; (S)-tetrahydrodipicolinate from L-aspartate: step 4/4. Its function is as follows. Catalyzes the conversion of 4-hydroxy-tetrahydrodipicolinate (HTPA) to tetrahydrodipicolinate. The chain is 4-hydroxy-tetrahydrodipicolinate reductase from Erwinia tasmaniensis (strain DSM 17950 / CFBP 7177 / CIP 109463 / NCPPB 4357 / Et1/99).